We begin with the raw amino-acid sequence, 331 residues long: HTH-type transcriptional regulator GntR (331 aa).

An HTH lacI-type domain is found at 6-60; sequence PVLQDVADRVGVTKMTVSRFLRNPEQVSVALRGKIAAALDELGYIPNRAPDILSN. The segment at residues 8–27 is a DNA-binding region (H-T-H motif); it reads LQDVADRVGVTKMTVSRFLR.

Its pathway is carbohydrate acid metabolism; D-gluconate degradation [regulation]. Functionally, negative regulator for the gluconate utilization system GNT-I, the gntUKR operon. The polypeptide is HTH-type transcriptional regulator GntR (gntR) (Escherichia coli O6:H1 (strain CFT073 / ATCC 700928 / UPEC)).